Reading from the N-terminus, the 220-residue chain is Peptidyl-tRNA hydrolase (220 aa).

Y14 is a binding site for tRNA. H19 (proton acceptor) is an active-site residue. TRNA-binding residues include F66, N68, and N114. Residues 184-220 (QAFNSTDLRPRPEPVPAPQPADVSGPQETGPAERPEV) are disordered.

The protein belongs to the PTH family. Monomer.

It is found in the cytoplasm. The catalysed reaction is an N-acyl-L-alpha-aminoacyl-tRNA + H2O = an N-acyl-L-amino acid + a tRNA + H(+). In terms of biological role, hydrolyzes ribosome-free peptidyl-tRNAs (with 1 or more amino acids incorporated), which drop off the ribosome during protein synthesis, or as a result of ribosome stalling. Its function is as follows. Catalyzes the release of premature peptidyl moieties from peptidyl-tRNA molecules trapped in stalled 50S ribosomal subunits, and thus maintains levels of free tRNAs and 50S ribosomes. This is Peptidyl-tRNA hydrolase from Deinococcus deserti (strain DSM 17065 / CIP 109153 / LMG 22923 / VCD115).